A 319-amino-acid chain; its full sequence is G-protein coupled receptor 171 (319 aa).

The Extracellular segment spans residues 1–21 (MTNSSFFCPVYKDLEPFTYFF). Asn-3 carries N-linked (GlcNAc...) asparagine glycosylation. Residues 22–42 (YLVFLVGIIGSCFATWAFIQK) traverse the membrane as a helical segment. Residues 43–48 (NTNHRC) are Cytoplasmic-facing. The chain crosses the membrane as a helical span at residues 49–69 (VSIYLINLLTADFLLTLALPV). Residues 70-89 (KIVVDLGVAPWKLKIFHCQV) lie on the Extracellular side of the membrane. Residues 90 to 110 (TACLIYINMYLSIIFLAFVSI) traverse the membrane as a helical segment. The Cytoplasmic segment spans residues 111-132 (DRCLQLTHSCKIYRIQEPGFAK). A helical transmembrane segment spans residues 133 to 153 (MISTVVWLMVLLIMVPNMMIP). The Extracellular portion of the chain corresponds to 154–181 (IKDIKEKSNVGCMEFKKEFGRNWHLLTN). Residues 182–202 (FICVAIFLNFSAIILISNCLV) form a helical membrane-spanning segment. The Cytoplasmic portion of the chain corresponds to 203–224 (IRQLYRNKDNENYPNVKKALIN). The chain crosses the membrane as a helical span at residues 225–245 (ILLVTTGYIICFVPYHIVRIP). Over 246 to 268 (YTLSQTEVITDCSTRISLFKAKE) the chain is Extracellular. Residues 269 to 289 (ATLLLAVSNLCFDPILYYHLS) form a helical membrane-spanning segment. The Cytoplasmic segment spans residues 290 to 319 (KAFRSKVTETFASPKETKAQKEKLRCENNA).

It belongs to the G-protein coupled receptor 1 family. In terms of tissue distribution, expressed in both T-cell subsets and natural killer cells, while it is undetectable in B cells or CD14(+) monocytes. Expressed in peripheral blood mononuclear cells (PBMC) and Jurkat cells (at protein level).

The protein localises to the cell membrane. In terms of biological role, G-protein coupled receptor for Big LEN, a 16-amino acid neuropeptide produced from the precursor protein, proSAAS (encoded by PCSK1N). Acts through a G(i)-alpha-mediated pathway in response to Big LEN. Big LEN-GPR171 system plays an important role in regulating feeding and metabolism. Also plays a role in modulating fear and anxiety-like behaviors in the basolateral amygdala. Big LEN-GPR171 modulates the mu-type opioid receptor signaling and antinociception. Acts as a negative regulator T cell function. The sequence is that of G-protein coupled receptor 171 from Homo sapiens (Human).